The chain runs to 262 residues: MSERESWHKEIDLFLVAMGYFTRIPMPKWVEVDSDKLNKASRYFGLVGLLVGLLSAIVFWLTQNWLPAGVSVLLAMLVGVLLTGGFHEDGLADTFDGFGGGWTAEDKLRIMKDSRLGSYGALALMLALLLKWQLLVELALYDPVVAGSALIVAHTVSRVVSASIIFSEKYVRDDETSKSKPLSQHQGINELLILIASGVLVLLFLKGLAALSLLLVMIGLRRLIIVIFRRQIGGYTGDTLGAAQQIAEIVCYFVLLVVGNIL.

Helical transmembrane passes span 43–63 (YFGL…WLTQ), 66–86 (LPAG…TGGF), 120–140 (GALA…ELAL), 146–166 (AGSA…SIIF), 191–211 (LLIL…LAAL), and 242–262 (AAQQ…GNIL).

This sequence belongs to the CobS family. The cofactor is Mg(2+).

The protein localises to the cell inner membrane. It carries out the reaction alpha-ribazole + adenosylcob(III)inamide-GDP = adenosylcob(III)alamin + GMP + H(+). The catalysed reaction is alpha-ribazole 5'-phosphate + adenosylcob(III)inamide-GDP = adenosylcob(III)alamin 5'-phosphate + GMP + H(+). It participates in cofactor biosynthesis; adenosylcobalamin biosynthesis; adenosylcobalamin from cob(II)yrinate a,c-diamide: step 7/7. In terms of biological role, joins adenosylcobinamide-GDP and alpha-ribazole to generate adenosylcobalamin (Ado-cobalamin). Also synthesizes adenosylcobalamin 5'-phosphate from adenosylcobinamide-GDP and alpha-ribazole 5'-phosphate. This chain is Adenosylcobinamide-GDP ribazoletransferase, found in Shewanella baltica (strain OS195).